The sequence spans 366 residues: D-alanine--D-alanine ligase (366 aa).

One can recognise an ATP-grasp domain in the interval 148-357 (KMTFEQAGLA…FPELVDRLIQ (210 aa)). 184–239 (EAALGYPAFVKPANLGSSVGIAKVRSRQELEAALDNAASYDRRLVVEAGVVAREVE) provides a ligand contact to ATP. The Mg(2+) site is built by Asp310, Glu324, and Asn326.

This sequence belongs to the D-alanine--D-alanine ligase family. Mg(2+) serves as cofactor. Requires Mn(2+) as cofactor.

Its subcellular location is the cytoplasm. It carries out the reaction 2 D-alanine + ATP = D-alanyl-D-alanine + ADP + phosphate + H(+). The protein operates within cell wall biogenesis; peptidoglycan biosynthesis. Its function is as follows. Cell wall formation. In Nostoc punctiforme (strain ATCC 29133 / PCC 73102), this protein is D-alanine--D-alanine ligase.